A 155-amino-acid chain; its full sequence is Ribosome maturation factor RimP (155 aa).

The protein belongs to the RimP family.

The protein localises to the cytoplasm. Required for maturation of 30S ribosomal subunits. The protein is Ribosome maturation factor RimP of Listeria monocytogenes serotype 4a (strain HCC23).